Here is a 2962-residue protein sequence, read N- to C-terminus: Sex determination and dosage compensation protein sdc-2 (2962 aa).

Disordered regions lie at residues 1–28 (MSDESELGNQSEMESFNESDSPDEADPD) and 1061–1110 (DKRS…QVDP). Residues 15-27 (SFNESDSPDEADP) are compositionally biased toward acidic residues. 2 coiled-coil regions span residues 995–1085 (LESA…LADK) and 1140–1268 (REER…KRVS). Disordered regions lie at residues 1535-1554 (PASLNSEDSDSEDSREGSPV) and 2198-2227 (LDSSGSGRSTRCEIFEDSPSEDENDENQLD). Residues 2212–2225 (FEDSPSEDENDENQ) are compositionally biased toward acidic residues.

As to quaternary structure, component of the SDC complex, which consists of sdc-1, sdc-2 and sdc-3. Within the complex, interacts with sdc-1 and sdc-3. As to expression, expressed in hermaphrodites (XX), but absent in males (XO) (at protein level).

The protein resides in the chromosome. Component of the SDC complex that functions in sex determination and in X chromosome dosage compensation specifically in hermaphrodite (XX) animals. Required for the recruitment of the condensin I-like dosage compensation complex to the male sex-determining autosomal gene her-1, thereby contributing to its repression and initiating hermaphrodite sexual development. Plays a central role in X-chromosome recognition and in the recruitment and assembly of the dosage compensation complex and the dosage compensation protein dpy-21 onto the X chromosomes in hermaphrodites, which leads to a reduction of X-linked gene transcription and an equalization of X-linked gene expression between the sexes. May confer protection against toxicity induced by heavy metals such as arsenite. The chain is Sex determination and dosage compensation protein sdc-2 from Caenorhabditis elegans.